A 281-amino-acid chain; its full sequence is Transmembrane protein 41A-A (281 aa).

The signal sequence occupies residues 1–22; sequence MRSLVGLVAVIVTATFYLYSLS. A disordered region spans residues 32-56; it reads HKQSHEGETTDAKDGDEPSEMETAS. A compositionally biased stretch (basic and acidic residues) spans 34–47; it reads QSHEGETTDAKDGD. A run of 5 helical transmembrane segments spans residues 84 to 104, 107 to 127, 170 to 190, 197 to 217, and 236 to 256; these read GYVLLLFCSAYLYKQAFAIPG, FLNILAGALFGTWFGLLLTCV, LFFFLLFLRFFPMSPNWFLNM, IPVTLFFMAVFIGLMPYNFIC, and WSVVLKLLLTACVALLPGALI.

It belongs to the TMEM41 family.

It localises to the membrane. This chain is Transmembrane protein 41A-A (tmem41aa), found in Danio rerio (Zebrafish).